Consider the following 621-residue polypeptide: 1-deoxy-D-xylulose-5-phosphate synthase (621 aa).

Residues H80 and 121–123 contribute to the thiamine diphosphate site; that span reads GHS. Residue D152 participates in Mg(2+) binding. Thiamine diphosphate contacts are provided by residues 153–154, N181, Y288, and E370; that span reads GA. N181 is a binding site for Mg(2+).

It belongs to the transketolase family. DXPS subfamily. As to quaternary structure, homodimer. Mg(2+) is required as a cofactor. Thiamine diphosphate serves as cofactor.

It carries out the reaction D-glyceraldehyde 3-phosphate + pyruvate + H(+) = 1-deoxy-D-xylulose 5-phosphate + CO2. The protein operates within metabolic intermediate biosynthesis; 1-deoxy-D-xylulose 5-phosphate biosynthesis; 1-deoxy-D-xylulose 5-phosphate from D-glyceraldehyde 3-phosphate and pyruvate: step 1/1. Its function is as follows. Catalyzes the acyloin condensation reaction between C atoms 2 and 3 of pyruvate and glyceraldehyde 3-phosphate to yield 1-deoxy-D-xylulose-5-phosphate (DXP). The protein is 1-deoxy-D-xylulose-5-phosphate synthase of Serratia proteamaculans (strain 568).